The sequence spans 683 residues: Inositol-trisphosphate 3-kinase C (683 aa).

Residues 1-124 (MRRCPCRGSL…PDRSSLRTHL (124 aa)) are disordered. The segment covering 13 to 22 (AEAGALPAAA) has biased composition (low complexity). Residues 44-58 (PGAGAPAGRPEGGGP) show a composition bias toward gly residues. Over residues 105 to 124 (ETERPKQKTEPDRSSLRTHL) the composition is skewed to basic and acidic residues. Phosphoserine occurs at positions 127 and 162. Residues 147-308 (TDPHRSDLQF…EDGPLEEPEP (162 aa)) form a disordered region. Polar residues predominate over residues 196 to 206 (WTHQNSSSLQT). Positions 249-259 (SQKKQDTEAAR) are enriched in basic and acidic residues. Positions 267-289 (FQIQQDTDGSWTQPSTDGSQTAP) are enriched in polar residues. Residues 297 to 308 (EPEDGPLEEPEP) are compositionally biased toward acidic residues. Residues 324–332 (LCPVPRLII) carry the Nuclear export signal motif. The tract at residues 334-387 (PETPEPEAQPVGPPSRVEGGSGGFSSASSFDESEDDVVAGGGGASDPEDRSGSK) is disordered. Residue T336 is modified to Phosphothreonine. The residue at position 404 (S404) is a Phosphoserine. ATP-binding positions include K431, 471 to 473 (EDL), and D484. Residues K486, 507–513 (RKDMYEK), and 534–541 (KPRYMQWR) each bind substrate. The calmodulin-binding stretch occupies residues 509–517 (DMYEKMVAV). K558 and D638 together coordinate ATP. A substrate-binding site is contributed by K641.

It belongs to the inositol phosphokinase (IPK) family. As to expression, highly expressed in pancreas, skeletal muscle, liver, placenta and weakly in kidney and brain.

It is found in the nucleus. Its subcellular location is the cytoplasm. The enzyme catalyses 1D-myo-inositol 1,4,5-trisphosphate + ATP = 1D-myo-inositol 1,3,4,5-tetrakisphosphate + ADP + H(+). With respect to regulation, activated by calcium/calmodulin. Inhibited by high concentrations of the substrate Ins(1,2,4)P3, and allosterically activated by the product Ins(1,3,4,5)P4. Its function is as follows. Catalyzes the phosphorylation of 1D-myo-inositol 1,4,5-trisphosphate (InsP3) into 1D-myo-inositol 1,3,4,5-tetrakisphosphate and participates to the regulation of calcium homeostasis. Can phosphorylate inositol 2,4,5-triphosphate to inositol 2,4,5,6-tetraphosphate. This is Inositol-trisphosphate 3-kinase C from Homo sapiens (Human).